We begin with the raw amino-acid sequence, 208 residues long: Uracil phosphoribosyltransferase (208 aa).

Residues Arg78, Arg103, and 130-138 (DPMLATGGS) contribute to the 5-phospho-alpha-D-ribose 1-diphosphate site. Residues Ile193 and 198-200 (GDA) each bind uracil. Asp199 lines the 5-phospho-alpha-D-ribose 1-diphosphate pocket.

It belongs to the UPRTase family. It depends on Mg(2+) as a cofactor.

It catalyses the reaction UMP + diphosphate = 5-phospho-alpha-D-ribose 1-diphosphate + uracil. The protein operates within pyrimidine metabolism; UMP biosynthesis via salvage pathway; UMP from uracil: step 1/1. Allosterically activated by GTP. In terms of biological role, catalyzes the conversion of uracil and 5-phospho-alpha-D-ribose 1-diphosphate (PRPP) to UMP and diphosphate. The protein is Uracil phosphoribosyltransferase of Haemophilus influenzae (strain 86-028NP).